Reading from the N-terminus, the 175-residue chain is Acetyl-CoA decarbonylase/synthase complex subunit epsilon 2 (175 aa).

It belongs to the CdhB family. As to quaternary structure, heterotetramer of two alpha and two epsilon subunits. The ACDS complex is made up of alpha, epsilon, beta, gamma and delta subunits with a probable stoichiometry of (alpha(2)epsilon(2))(4)-beta(8)-(gamma(1)delta(1))(8).

Part of a complex that catalyzes the reversible cleavage of acetyl-CoA, allowing autotrophic growth from CO(2). The alpha-epsilon subcomponent functions as a carbon monoxide dehydrogenase. The precise role of the epsilon subunit is unclear; it may have a stabilizing role within the alpha(2)epsilon(2) component and/or be involved in electron transfer to FAD during a potential FAD-mediated CO oxidation. The protein is Acetyl-CoA decarbonylase/synthase complex subunit epsilon 2 (cdhB2) of Archaeoglobus fulgidus (strain ATCC 49558 / DSM 4304 / JCM 9628 / NBRC 100126 / VC-16).